Here is a 312-residue protein sequence, read N- to C-terminus: Malate dehydrogenase (312 aa).

NAD(+) contacts are provided by residues 7-13 and D34; that span reads GASGGIG. Residues R81 and R87 each coordinate substrate. NAD(+)-binding positions include N94 and 117-119; that span reads ITN. Substrate is bound by residues N119 and R153. The active-site Proton acceptor is H177. M227 is an NAD(+) binding site.

The protein belongs to the LDH/MDH superfamily. MDH type 1 family. Homodimer.

The catalysed reaction is (S)-malate + NAD(+) = oxaloacetate + NADH + H(+). Catalyzes the reversible oxidation of malate to oxaloacetate. This chain is Malate dehydrogenase, found in Actinobacillus succinogenes (strain ATCC 55618 / DSM 22257 / CCUG 43843 / 130Z).